A 252-amino-acid polypeptide reads, in one-letter code: ELH type 2 (252 aa).

The signal sequence occupies residues 1-19 (AISLLMCLILSALCASSES). 3 propeptides span residues 20–75 (AVVH…VNNE), 92–130 (PQEVSGLKPVMMSRASASADENSLFDLYNTDGAMYQREL), and 144–185 (AAGD…SGIA). The span at 145 to 161 (AGDEDKAEEHNPETESH) shows a compositional bias: basic and acidic residues. A disordered region spans residues 145–171 (AGDEDKAEEHNPETESHSRRKRSALTP). The residue at position 222 (Lys222) is a Lysine amide.

The protein belongs to the molluscan ELH family. In terms of tissue distribution, bag cell neurons.

It localises to the secreted. Functionally, ELH acts as a neurotransmitter locally, upon neurons of the abdominal ganglion and as a hormone by diffusing into the circulating hemolymph and modulating the activity of other organs. It specifically causes contraction of smooth muscle in the ovotestis and expulsion of the egg string. Its function is as follows. Alpha-BCP decreases the activity of a cluster of neurons in the left upper quadrant of the abdominal ganglion. In terms of biological role, beta-BCP specifically excites 2 neurons, L1 and R1, in the abdominal ganglion. The polypeptide is ELH type 2 (ELH2) (Aplysia parvula (Dwarf sea hare)).